Reading from the N-terminus, the 806-residue chain is Acetyl-CoA decarbonylase/synthase complex subunit alpha 1 (806 aa).

[4Fe-4S] cluster-binding residues include C73, C76, C77, C79, C84, and C94. H117 is a CO binding site. [Ni-4Fe-4S] cluster is bound by residues H250, C278, and C323. 2 consecutive 4Fe-4S ferredoxin-type domains span residues 407 to 436 (DEEF…IPEA) and 446 to 475 (SYLD…LNII). The [4Fe-4S] cluster site is built by C417, C420, C423, C427, C455, C458, C461, and C465. C523, C552, and C587 together coordinate [Ni-4Fe-4S] cluster.

The protein belongs to the Ni-containing carbon monoxide dehydrogenase family. As to quaternary structure, heterotetramer of two alpha and two epsilon subunits. The ACDS complex is made up of alpha, epsilon, beta, gamma and delta subunits with a probable stoichiometry of (alpha(2)epsilon(2))(4)-beta(8)-(gamma(1)delta(1))(8). [4Fe-4S] cluster is required as a cofactor. The cofactor is [Ni-4Fe-4S] cluster.

The catalysed reaction is CO + 2 oxidized [2Fe-2S]-[ferredoxin] + H2O = 2 reduced [2Fe-2S]-[ferredoxin] + CO2 + 2 H(+). It participates in one-carbon metabolism; methanogenesis from acetate. Carbon monoxide dehydrogenase activity is inhibited by KCN and is rapidly inactivated by O(2). Part of the ACDS complex that catalyzes the reversible cleavage of acetyl-CoA, allowing growth on acetate as sole source of carbon and energy. The alpha-epsilon subcomponent functions as a carbon monoxide dehydrogenase. This Methanosarcina barkeri (strain Fusaro / DSM 804) protein is Acetyl-CoA decarbonylase/synthase complex subunit alpha 1.